The chain runs to 124 residues: Mediator of RNA polymerase II transcription subunit 31 (124 aa).

This sequence belongs to the Mediator complex subunit 31 family. Component of the Mediator complex.

The protein resides in the nucleus. In terms of biological role, component of the Mediator complex, a coactivator involved in the regulated transcription of nearly all RNA polymerase II-dependent genes. Mediator functions as a bridge to convey information from gene-specific regulatory proteins to the basal RNA polymerase II transcription machinery. Mediator is recruited to promoters by direct interactions with regulatory proteins and serves as a scaffold for the assembly of a functional preinitiation complex with RNA polymerase II and the general transcription factors. This Kluyveromyces lactis (strain ATCC 8585 / CBS 2359 / DSM 70799 / NBRC 1267 / NRRL Y-1140 / WM37) (Yeast) protein is Mediator of RNA polymerase II transcription subunit 31 (SOH1).